We begin with the raw amino-acid sequence, 727 residues long: Cadmium-transporting ATPase (727 aa).

The HMA domain occupies 12–75 (EMNVYRVQGF…AGAFENLKVS (64 aa)). Cd(2+) is bound by residues C23 and C26. 5 consecutive transmembrane segments (helical) span residues 106–126 (STLLFATLLIAFGYLSHFVNG), 130–150 (LVTSMLFVGSIVIGGYSLFKV), 171–191 (IGATIIGKWAEASIVVILFAI), 336–356 (IIMVIAALVAVVPPLFFGGSW), and 364–384 (LAVLVVGCPCALVISTPISIV). Residue D415 is the 4-aspartylphosphate intermediate of the active site. 2 helical membrane-spanning segments follow: residues 672 to 694 (LNIIKANITFAIGIKIIALLLVI) and 699 to 721 (TLWIAILSDMGATILVALNSLRL).

The protein belongs to the cation transport ATPase (P-type) (TC 3.A.3) family. Type IB subfamily.

The protein localises to the cell membrane. It carries out the reaction Cd(2+)(in) + ATP + H2O = Cd(2+)(out) + ADP + phosphate + H(+). With respect to regulation, inhibited by the antibiotic bafilomycin A1. Partially inhibited by DCCD, nigericin and FCCP. Functionally, couples the hydrolysis of ATP with the export of cadmium. Involved in cadmium resistance. The sequence is that of Cadmium-transporting ATPase from Staphylococcus aureus.